The chain runs to 78 residues: Large ribosomal subunit protein eL20 (78 aa).

The protein belongs to the eukaryotic ribosomal protein eL20 family. In terms of assembly, part of the 50S ribosomal subunit. Binds 23S rRNA.

This chain is Large ribosomal subunit protein eL20, found in Pyrobaculum calidifontis (strain DSM 21063 / JCM 11548 / VA1).